The primary structure comprises 178 residues: UPF0302 protein Bcer98_1244 (178 aa).

Belongs to the UPF0302 family.

The polypeptide is UPF0302 protein Bcer98_1244 (Bacillus cytotoxicus (strain DSM 22905 / CIP 110041 / 391-98 / NVH 391-98)).